Reading from the N-terminus, the 514-residue chain is LWamide neuropeptides (514 aa).

The first 22 residues, 1–22 (MALKCHLVLLAITLLLAQCSGS), serve as a signal peptide directing secretion. Residues 23-53 (VDKKDSTTNHLDEKKTDSTEAHIVQETDALK) show a composition bias toward basic and acidic residues. Residues 23 to 75 (VDKKDSTTNHLDEKKTDSTEAHIVQETDALKENSYLGAEEESKEEDKKRSAAP) constitute a propeptide that is removed on maturation. Residues 23-180 (VDKKDSTTNH…PGLWGRSADA (158 aa)) form a disordered region. Tryptophan amide occurs at positions 81 and 90. A propeptide spanning residues 93–97 (SADAG) is cleaved from the precursor. 2 positions are modified to tryptophan amide: tryptophan 102 and tryptophan 111. A propeptide spanning residues 114 to 118 (SADAG) is cleaved from the precursor. Residues tryptophan 123 and tryptophan 132 each carry the tryptophan amide modification. The propeptide occupies 135–139 (SADAG). Tryptophan amide occurs at positions 144 and 153. Residues 156–160 (SADAG) constitute a propeptide that is removed on maturation. Residues tryptophan 165 and tryptophan 174 each carry the tryptophan amide modification. The propeptide occupies 177–181 (SADAR). A Tryptophan amide modification is found at tryptophan 186. Residues 190-199 (EIYALWGGKR) constitute a propeptide that is removed on maturation. Tryptophan 205 is modified (tryptophan amide). A propeptide spanning residues 208–212 (SADPG) is cleaved from the precursor. Tryptophan 217 carries the tryptophan amide modification. Residues 221 to 230 (ELVGLWGGKR) constitute a propeptide that is removed on maturation. Tryptophan 236 is subject to Tryptophan amide. Residues 239-243 (SAEAG) constitute a propeptide that is removed on maturation. Residues tryptophan 248 and tryptophan 257 each carry the tryptophan amide modification. Residues 258 to 475 (GRSADPLQPG…GRSAGSGQLG (218 aa)) form a disordered region. The propeptide occupies 260–264 (SADPL). Tryptophan 269 and tryptophan 278 each carry tryptophan amide. Positions 281–284 (SADP) are excised as a propeptide. A tryptophan amide mark is found at tryptophan 290 and tryptophan 299. Positions 302-305 (SADP) are excised as a propeptide. Tryptophan amide occurs at positions 311 and 320. Positions 323 to 326 (SADP) are excised as a propeptide. A tryptophan amide mark is found at tryptophan 332 and tryptophan 341. The propeptide occupies 344-347 (SADP). At tryptophan 353 the chain carries Tryptophan amide. Residues 356–366 (SPGLWGRSADP) constitute a propeptide that is removed on maturation. Residue tryptophan 372 is modified to Tryptophan amide. Positions 376–387 (QNPGFWGRSADP) are excised as a propeptide. Tryptophan amide occurs at positions 393 and 402. A propeptide spanning residues 405 to 408 (SADP) is cleaved from the precursor. Tryptophan amide occurs at positions 414 and 423. Positions 426-429 (SADP) are excised as a propeptide. Residues tryptophan 435 and tryptophan 444 each carry the tryptophan amide modification. A propeptide spanning residues 447–450 (SADP) is cleaved from the precursor. Residues tryptophan 456 and tryptophan 465 each carry the tryptophan amide modification. The propeptide occupies 468 to 472 (SAGSG). Tryptophan amide is present on residues tryptophan 477 and tryptophan 487. The tract at residues 489 to 514 (RSAEPPQFEDLEDLKKKSAIPQPKGQ) is disordered. Positions 490 to 514 (SAEPPQFEDLEDLKKKSAIPQPKGQ) are excised as a propeptide.

The protein belongs to the LWamide neuropeptide family.

It localises to the secreted. In terms of biological role, metamorphosin A may be part of an internal signaling system involved in control of metamorphosis. The chain is LWamide neuropeptides from Anthopleura elegantissima (Green aggregating anemone).